The sequence spans 444 residues: 23S rRNA (uracil(1939)-C(5))-methyltransferase RlmD (444 aa).

The TRAM domain maps to 5 to 64 (KPKLNLTSQTARIVNLSHDGRGIARINGKATFIQGALPGEVVEFQYTRVKKDFDEGKLLS). [4Fe-4S] cluster is bound by residues cysteine 77, cysteine 83, cysteine 86, and cysteine 166. S-adenosyl-L-methionine-binding residues include glutamine 276, phenylalanine 305, asparagine 310, glutamate 326, asparagine 353, and aspartate 374. The Nucleophile role is filled by cysteine 400.

It belongs to the class I-like SAM-binding methyltransferase superfamily. RNA M5U methyltransferase family. RlmD subfamily.

It carries out the reaction uridine(1939) in 23S rRNA + S-adenosyl-L-methionine = 5-methyluridine(1939) in 23S rRNA + S-adenosyl-L-homocysteine + H(+). In terms of biological role, catalyzes the formation of 5-methyl-uridine at position 1939 (m5U1939) in 23S rRNA. This chain is 23S rRNA (uracil(1939)-C(5))-methyltransferase RlmD, found in Legionella pneumophila (strain Lens).